We begin with the raw amino-acid sequence, 446 residues long: N-succinylarginine dihydrolase (446 aa).

Residues 19-28 (AGLSFGNVAS), Asn-110, and 137-138 (HR) each bind substrate. Glu-174 is a catalytic residue. Arg-213 is a binding site for substrate. His-249 is a catalytic residue. 2 residues coordinate substrate: Asp-251 and Asn-364. Cys-370 (nucleophile) is an active-site residue.

Belongs to the succinylarginine dihydrolase family. As to quaternary structure, homodimer.

The enzyme catalyses N(2)-succinyl-L-arginine + 2 H2O + 2 H(+) = N(2)-succinyl-L-ornithine + 2 NH4(+) + CO2. The protein operates within amino-acid degradation; L-arginine degradation via AST pathway; L-glutamate and succinate from L-arginine: step 2/5. Functionally, catalyzes the hydrolysis of N(2)-succinylarginine into N(2)-succinylornithine, ammonia and CO(2). The polypeptide is N-succinylarginine dihydrolase (Burkholderia multivorans (strain ATCC 17616 / 249)).